A 50-amino-acid chain; its full sequence is Penaeidin-1 (50 aa).

3 disulfide bridges follow: Cys25–Cys38, Cys27–Cys45, and Cys39–Cys46.

As to expression, higher expression in hemocytes and to a lesser extent in heart, testis, gills, intestine, lymphoid organ and hepatopancreas. Traces in eyes and subcuticular epithelium. Not present in the brain.

Its subcellular location is the cytoplasmic granule. Antibacterial activity against M.luteus and E.coli bacteria. Antifungal activity against N.crassa and F.oxysporum. Presents chitin-binding activity. This Penaeus vannamei (Whiteleg shrimp) protein is Penaeidin-1.